A 521-amino-acid chain; its full sequence is GMP synthase [glutamine-hydrolyzing] (521 aa).

The Glutamine amidotransferase type-1 domain maps to 5 to 197 (KILILDFGSQ…VLDICGAQPG (193 aa)). The active-site Nucleophile is the C81. Catalysis depends on residues H171 and E173. Residues 198 to 390 (WTMPNYIEEA…LGLPREMVYR (193 aa)) form the GMPS ATP-PPase domain. 225–231 (SGGVDSS) is an ATP binding site.

In terms of assembly, homodimer.

It carries out the reaction XMP + L-glutamine + ATP + H2O = GMP + L-glutamate + AMP + diphosphate + 2 H(+). The protein operates within purine metabolism; GMP biosynthesis; GMP from XMP (L-Gln route): step 1/1. Its function is as follows. Catalyzes the synthesis of GMP from XMP. The polypeptide is GMP synthase [glutamine-hydrolyzing] (Neisseria gonorrhoeae (strain NCCP11945)).